The chain runs to 715 residues: Polyribonucleotide nucleotidyltransferase (715 aa).

Mg(2+) is bound by residues Asp491 and Asp497. In terms of domain architecture, KH spans 558–617 (PKIMTMTINPEKIRDVIGPQGRVINKIIEETGVKIDIEQDGRVFIASINHEANLRAKQII). One can recognise an S1 motif domain in the interval 627 to 695 (GQVYLGTVKR…DQGRVNLSRK (69 aa)).

The protein belongs to the polyribonucleotide nucleotidyltransferase family. It depends on Mg(2+) as a cofactor.

The protein localises to the cytoplasm. The enzyme catalyses RNA(n+1) + phosphate = RNA(n) + a ribonucleoside 5'-diphosphate. Functionally, involved in mRNA degradation. Catalyzes the phosphorolysis of single-stranded polyribonucleotides processively in the 3'- to 5'-direction. This is Polyribonucleotide nucleotidyltransferase from Brevibacillus brevis (strain 47 / JCM 6285 / NBRC 100599).